The primary structure comprises 354 residues: MAEMKTSPSQDEEAGVVAMQLATSTVLPMILKSAIELDLLNTIAKAGPGNYLSPSDLASKLLLSNPDAPVMLARILRVLATYKVLGCKRGEVEWLYCWTPVCKYLSNNEDGASIAPILLVHQDKVTIKSWYHLTDAVRDGGTAFNKAHDMSIFEYASQDPQFNKAFNRSMRGHSTITMKKILETYKGFEGLKSIVDVGGGTGATLNMIISKYPTIKGINFDLPHVVGDAPSLPGVEHVGGNMFASVPKGDAIFLKWIFHSWGDEECLKILKKCHQALGDNKKVIVAEFILPEDPGGSDSATKSAVHLDAIMLAYVPGGKERTEKEFESLAKRAGFKSFTKVCCAFNTWIMEFSK.

Residue histidine 121 coordinates bergaptol. S-adenosyl-L-homocysteine-binding residues include serine 174, glycine 198, aspartate 221, and lysine 255. Histidine 259 is a binding site for bergaptol. Histidine 259 serves as the catalytic Proton acceptor.

It belongs to the class I-like SAM-binding methyltransferase superfamily. Cation-independent O-methyltransferase family. COMT subfamily.

The enzyme catalyses a 5-hydroxyfurocoumarin + S-adenosyl-L-methionine = a 5-methoxyfurocoumarin + S-adenosyl-L-homocysteine + H(+). The catalysed reaction is bergaptol + S-adenosyl-L-methionine = bergapten + S-adenosyl-L-homocysteine. Inhibited by Cu(2+), Ni(2+) and Co(2+). This Ammi majus (Bishop's weed) protein is Bergaptol O-methyltransferase.